We begin with the raw amino-acid sequence, 133 residues long: Small ribosomal subunit protein uS8 (133 aa).

This sequence belongs to the universal ribosomal protein uS8 family. As to quaternary structure, part of the 30S ribosomal subunit.

Its function is as follows. One of the primary rRNA binding proteins, it binds directly to 16S rRNA central domain where it helps coordinate assembly of the platform of the 30S subunit. This chain is Small ribosomal subunit protein uS8, found in Aeropyrum pernix (strain ATCC 700893 / DSM 11879 / JCM 9820 / NBRC 100138 / K1).